Consider the following 432-residue polypeptide: Anaerobic glycerol-3-phosphate dehydrogenase subunit B (432 aa).

Belongs to the anaerobic G-3-P dehydrogenase subunit B family. In terms of assembly, composed of a catalytic GlpA/B dimer and of membrane bound GlpC. FMN serves as cofactor.

It carries out the reaction a quinone + sn-glycerol 3-phosphate = dihydroxyacetone phosphate + a quinol. The protein operates within polyol metabolism; glycerol degradation via glycerol kinase pathway; glycerone phosphate from sn-glycerol 3-phosphate (anaerobic route): step 1/1. Conversion of glycerol 3-phosphate to dihydroxyacetone. Uses fumarate or nitrate as electron acceptor. This Haemophilus influenzae (strain PittGG) protein is Anaerobic glycerol-3-phosphate dehydrogenase subunit B.